The primary structure comprises 663 residues: Innate immunity activator protein (663 aa).

The interval 1–73 is disordered; sequence MLQMPKLNEI…PGPGWDQCSP (73 aa). Positions 23–47 are enriched in low complexity; sequence EGRWAGPTGPEAARPARGARGQARG. Positions 50–59 are enriched in basic and acidic residues; sequence ARWDSWEHSR. Residues 117–147 adopt a coiled-coil conformation; the sequence is NAVRKQQRALEARLEACLEELRRLCLREAEL. The short motif at 164 to 170 is the Nuclear localization signal (NLS) 1 element; it reads PKVRRRI. Disordered stretches follow at residues 219 to 363 and 375 to 405; these read RQRK…SSLW and IRNV…QSLR. Over residues 225-246 the composition is skewed to basic and acidic residues; the sequence is ALQEEKKLRDLQRCLGDRRRNS. A compositionally biased stretch (low complexity) spans 259–272; that stretch reads ELSASDDSSLSDGL. A compositionally biased stretch (pro residues) spans 282 to 298; the sequence is PKPPPESPAPPSRPLPP. Basic and acidic residues predominate over residues 327 to 340; the sequence is TSLDHPYEKPRKSS. The Nuclear localization signal (NLS) 2 motif lies at 332 to 338; sequence PYEKPRK. A compositionally biased stretch (polar residues) spans 349 to 361; that stretch reads PATTPQDQPNPSS. The short motif at 422-428 is the Nuclear localization signal (NLS) 3 element; that stretch reads PRRRPTH. Residues 448 to 483 are disordered; sequence PACHSCSEDSGSDVSSISHPTSPGSSSPDISFLRPL. Over residues 455–475 the composition is skewed to low complexity; it reads EDSGSDVSSISHPTSPGSSSP.

As to quaternary structure, interacts with IRAK1, NOD2 and RIPK2; the interaction takes place upon PRR stimulation. Interacts with YWHAQ/14-3-3T; the interaction increases upon PRR stimulation and is required for cellular signaling pathway activation and cytokine secretion. Interacts (via N-terminal domain) with CYTH1 and CYTH2 (via their N-terminal domains). Interacts with FBXW11 and BTRC; associates with SCF E3 ubiquitin-protein ligase complexes.

It is found in the nucleus. Its subcellular location is the cytoplasm. Functionally, expressed in peripheral macrophages and intestinal myeloid-derived cells, is required for optimal PRR (pattern recognition receptor)-induced signaling, cytokine secretion, and bacterial clearance. Upon stimulation of a broad range of PRRs (pattern recognition receptor) such as NOD2 or TLR2, TLR3, TLR4, TLR5, TLR7 and TLR9, associates with YWHAQ/14-3-3T, which in turn leads to the recruitment and activation of MAP kinases and NF-kappa-B signaling complexes that amplifies PRR-induced downstream signals and cytokine secretion. In the intestine, regulates adherens junction stability by regulating the degradation of CYTH1 and CYTH2, probably acting as substrate cofactor for SCF E3 ubiquitin-protein ligase complexes. Stabilizes adherens junctions by limiting CYTH1-dependent ARF6 activation. The protein is Innate immunity activator protein of Mus musculus (Mouse).